Consider the following 118-residue polypeptide: Large ribosomal subunit protein bL20 (118 aa).

It belongs to the bacterial ribosomal protein bL20 family.

Functionally, binds directly to 23S ribosomal RNA and is necessary for the in vitro assembly process of the 50S ribosomal subunit. It is not involved in the protein synthesizing functions of that subunit. The chain is Large ribosomal subunit protein bL20 from Lactobacillus acidophilus (strain ATCC 700396 / NCK56 / N2 / NCFM).